We begin with the raw amino-acid sequence, 330 residues long: MISFSSFYKKIADSSLQHWLETLPAILGQWQREHKHGTLPKWEKVLNKLHYPNPDTLELKDSVTIGSGQQLTSGEQQKLENLLRIFQPWRKGPFSVHGINIDTEWRSDWKWERILPHLSPLNNRTVLDVGCGSGYHMWRMLGEGANHVVGIDPSTLFLCQFEAIKRLAGEEQPIHLLPLGIEELPPLDAFDTVFSMGVLYHRRSPIDHLLQLRDQLRTGGELVLETLVIDGDENTVLVPEDRYGKMNNVWFLPSAAALALWLKKADFVDIRCVDIDVTSLAEQRSTDWMPNESLVDYLDPSNIDLTVEGYPAPKRATFIATKNQPNKDLI.

Residues Lys-91, Trp-105, Lys-110, Gly-130, 152–154 (DPS), 181–182 (IE), Met-196, Tyr-200, and Arg-315 contribute to the carboxy-S-adenosyl-L-methionine site.

Belongs to the class I-like SAM-binding methyltransferase superfamily. CmoB family. In terms of assembly, homotetramer.

It carries out the reaction carboxy-S-adenosyl-L-methionine + 5-hydroxyuridine(34) in tRNA = 5-carboxymethoxyuridine(34) in tRNA + S-adenosyl-L-homocysteine + H(+). Catalyzes carboxymethyl transfer from carboxy-S-adenosyl-L-methionine (Cx-SAM) to 5-hydroxyuridine (ho5U) to form 5-carboxymethoxyuridine (cmo5U) at position 34 in tRNAs. The polypeptide is tRNA U34 carboxymethyltransferase (Shewanella woodyi (strain ATCC 51908 / MS32)).